The chain runs to 165 residues: Growth arrest and DNA damage-inducible protein GADD45 alpha (165 aa).

Threonine 2 is modified (phosphothreonine).

It belongs to the GADD45 family. Interacts with AURKA, PCNA, GADD45GIP1 and MAPK14.

It localises to the nucleus. In terms of biological role, might affect PCNA interaction with some CDK (cell division protein kinase) complexes; stimulates DNA excision repair in vitro and inhibits entry of cells into S phase. In T-cells, functions as a regulator of p38 MAPKs by inhibiting p88 phosphorylation and activity. The chain is Growth arrest and DNA damage-inducible protein GADD45 alpha (GADD45A) from Bos taurus (Bovine).